We begin with the raw amino-acid sequence, 450 residues long: tRNA modification GTPase MnmE (450 aa).

Positions 26, 84, and 123 each coordinate (6S)-5-formyl-5,6,7,8-tetrahydrofolate. The 158-residue stretch at 219–376 folds into the TrmE-type G domain; the sequence is GMHVVLVGQP…LKAKLLEMIG (158 aa). Asparagine 229 is a binding site for K(+). GTP contacts are provided by residues 229–234, 248–254, 273–276, and 357–359; these read NVGKSS, TDIAGTT, DTAG, and SAR. Serine 233 is a binding site for Mg(2+). The K(+) site is built by threonine 248, isoleucine 250, and threonine 253. Mg(2+) is bound at residue threonine 254. (6S)-5-formyl-5,6,7,8-tetrahydrofolate is bound at residue lysine 450.

The protein belongs to the TRAFAC class TrmE-Era-EngA-EngB-Septin-like GTPase superfamily. TrmE GTPase family. As to quaternary structure, homodimer. Heterotetramer of two MnmE and two MnmG subunits. Requires K(+) as cofactor.

The protein localises to the cytoplasm. In terms of biological role, exhibits a very high intrinsic GTPase hydrolysis rate. Involved in the addition of a carboxymethylaminomethyl (cmnm) group at the wobble position (U34) of certain tRNAs, forming tRNA-cmnm(5)s(2)U34. The protein is tRNA modification GTPase MnmE of Chromobacterium violaceum (strain ATCC 12472 / DSM 30191 / JCM 1249 / CCUG 213 / NBRC 12614 / NCIMB 9131 / NCTC 9757 / MK).